Reading from the N-terminus, the 539-residue chain is MATSAPLRSLEEEVTCSICLDYLRDPVTIDCGHVFCRSCTTDVRPISGSRPVCPLCKKPFKKENIRPVWQLASLVENIERLKVDKGRQPGEVTREQQDAKLCERHREKLHYYCEDDGKLLCVMCRESREHRPHTAVLMEKAAQPHREKILNHLSTLRRDRDKIQGFQAKGEADILAALKKLQDQRQYIVAEFEQGHQFLREREEHLLEQLAKLEQELTEGREKFKSRGVGELARLALVISELEGKAQQPAAELMQDTRDFLNRYPRKKFWVGKPIARVVKKKTGEFSDKLLSLQRGLREFQGKLLRDLEYKTVSVTLDPQSASGYLQLSEDWKCVTYTSLYKSAYLHPQQFDCEPGVLGSKGFTWGKVYWEVEVEREGWSEDEEEGDEEEEGEEEEEEEEAGYGDGYDDWETDEDEESLGDEEEEEEEEEEEVLESCMVGVARDSVKRKGDLSLRPEDGVWALRLSSSGIWANTSPEAELFPALRPRRVGIALDYEGGTVTFTNAESQELIYTFTATFTRRLVPFLWLKWPGTRLLLRP.

An RING-type zinc finger spans residues 16 to 57; the sequence is CSICLDYLRDPVTIDCGHVFCRSCTTDVRPISGSRPVCPLCK. The segment at 97–138 adopts a B box-type zinc-finger fold; the sequence is QDAKLCERHREKLHYYCEDDGKLLCVMCRESREHRPHTAVLM. C102, H105, C124, and H130 together coordinate Zn(2+). Residues 188 to 227 adopt a coiled-coil conformation; the sequence is IVAEFEQGHQFLREREEHLLEQLAKLEQELTEGREKFKSR. The 245-residue stretch at 295-539 folds into the B30.2/SPRY domain; sequence RGLREFQGKL…WPGTRLLLRP (245 aa). Positions 376–437 are disordered; it reads REGWSEDEEE…EEEEEVLESC (62 aa). The span at 380–434 shows a compositional bias: acidic residues; the sequence is SEDEEEGDEEEEGEEEEEEEEAGYGDGYDDWETDEDEESLGDEEEEEEEEEEEVL.

Belongs to the TRIM/RBCC family. In terms of assembly, interacts with TBK1; this interaction bridges together TBK1 and NEMO in order to activate TBK1. Interacts with INCA1. In terms of processing, autoubiquitinates upon viral infection. In turn, autoubiquitinated TRIM26 recruits NEMO and bridges TBK1-NEMO interaction.

The protein localises to the cytoplasm. It localises to the nucleus. It carries out the reaction S-ubiquitinyl-[E2 ubiquitin-conjugating enzyme]-L-cysteine + [acceptor protein]-L-lysine = [E2 ubiquitin-conjugating enzyme]-L-cysteine + N(6)-ubiquitinyl-[acceptor protein]-L-lysine.. Its function is as follows. E3 ubiquitin-protein ligase which regulates the IFN-beta production and antiviral response downstream of various DNA-encoded pattern-recognition receptors (PRRs). Also plays a central role in determining the response to different forms of oxidative stress by controlling levels of DNA glycosylases NEIL1, NEIL3 and NTH1 that are involved in repair of damaged DNA. Promotes nuclear IRF3 ubiquitination and proteasomal degradation. Bridges together TBK1 and NEMO during the innate response to viral infection leading to the activation of TBK1. Positively regulates LPS-mediated inflammatory innate immune response by catalyzing the 'Lys-11'-linked polyubiquitination of TAB1 to enhance its activation and subsequent NF-kappa-B and MAPK signaling. In a manner independent of its catalytic activity, inhibits WWP2, a SOX2-directed E3 ubiquitin ligase, and thus protects SOX2 from polyubiquitination and proteasomal degradation. Ubiquitinates the histone acetyltransferase protein complex component PHF20 and thereby triggers its degradation in the nucleus after its recruitment by the histone demethylase KDM6B, serving as a scaffold protein. Upon induction by TGF-beta, ubiquitinates the TFIID component TAF7 for proteasomal degradation. Induces ferroptosis by ubiquitinating SLC7A11, a critical protein for lipid reactive oxygen species (ROS) scavenging. Inhibits directly hepatitis B virus replication by mediating HBX ubiquitination and subsequent degradation. Functionally, (Microbial infection) Promotes herpes simplex virus type 2/HHV-2 infection in vaginal epithelial cells by decreasing the nuclear localization of IRF3, the primary mediator of type I interferon activation. This is Tripartite motif-containing protein 26 (TRIM26) from Homo sapiens (Human).